Reading from the N-terminus, the 375-residue chain is uncharacterized protein (375 aa).

At 1-2 (MR) the chain is on the cytoplasmic side. The chain crosses the membrane as a helical; Signal-anchor for type II membrane protein span at residues 3-23 (WYSYVIPAVILSIIAISGVWW). Residues 24 to 375 (NATLGTRLDQ…YIEQRLFPQP (352 aa)) are Lumenal-facing.

This sequence belongs to the glycosyltransferase 34 family.

The protein resides in the endoplasmic reticulum membrane. It is found in the golgi apparatus membrane. This is an uncharacterized protein from Schizosaccharomyces pombe (strain 972 / ATCC 24843) (Fission yeast).